A 402-amino-acid chain; its full sequence is Potassium channel subfamily K member 9 (402 aa).

The Cytoplasmic segment spans residues 1–8 (MKRQNVRT). The helical transmembrane segment at 9–29 (LSLIACTFTYLLVGAAVFDAL) threads the bilayer. The Extracellular portion of the chain corresponds to 30-88 (ESDHEMREEEKLKAEEVRLRGKYNISSDDYQQLELVILQSEPHRAGVQWKFAGSFYFAI). Asn-53 carries an N-linked (GlcNAc...) asparagine glycan. An intramembrane region (pore-forming) is located at residues 89-101 (TVITTIGYGHAAP). Residues Thr-93, Ile-94, Gly-95, and Tyr-96 each contribute to the K(+) site. The interval 93-98 (TIGYGH) is selectivity filter 1. The Extracellular portion of the chain corresponds to 102 to 107 (GTDAGK). Residues 108-128 (AFCMFYAVLGIPLTLVMFQSL) traverse the membrane as a helical segment. At 129–158 (GERMNTFVRYLLKRIKKCCGMRNTEVSMEN) the chain is on the cytoplasmic side. A helical membrane pass occupies residues 159–179 (MVTVGFFSCMGTLCLGAAAFS). The Extracellular portion of the chain corresponds to 180–194 (QCEDWSFFHAYYYCF). The pore-forming intramembrane region spans 195-207 (ITLTTIGFGDFVA). Residues Thr-199, Ile-200, Gly-201, and Phe-202 each coordinate K(+). The selectivity filter 2 stretch occupies residues 199-204 (TIGFGD). Topologically, residues 208 to 218 (LQAKGALQRKP) are extracellular. A helical transmembrane segment spans residues 219-239 (FYVAFSFMYILVGLTVIGAFL). Residues 240-402 (NLVVLRFLTM…HRLHLRRKSI (163 aa)) lie on the Cytoplasmic side of the membrane. The tract at residues 243–248 (VLRFLT) is X-gate.

Belongs to the two pore domain potassium channel (TC 1.A.1.8) family. Homodimer. Heterodimer with KCNK1. Heterodimer with KCNK3. Expressed in adrenal glands mainly in outer zona glomerulosa and inner zona medullaris. Expressed in retinal ganglion cells. Expressed in dentate gyrus (at protein level).

Its subcellular location is the cell membrane. It is found in the mitochondrion inner membrane. It localises to the cell projection. The protein localises to the dendrite. It carries out the reaction K(+)(in) = K(+)(out). The catalysed reaction is Na(+)(in) = Na(+)(out). With respect to regulation, inhibited by NTS:NTSR1 signaling in dentate gyrus granule cells. K(+) channel that conducts voltage-dependent outward rectifying currents upon membrane depolarization. Voltage sensing is coupled to K(+) electrochemical gradient in an 'ion flux gating' mode where outward but not inward ion flow opens the gate. Changes ion selectivity and becomes permeable to Na(+) ions in response to extracellular acidification. Protonation of the pH sensor His-98 stabilizes C-type inactivation conformation likely converting the channel from outward K(+)-conducting, to inward Na(+)-conducting to nonconductive state. Homo- and heterodimerizes to form functional channels with distinct regulatory and gating properties. Allows K(+) currents with fast-gating kinetics important for the repolarization and hyperpolarization phases of action potentials. In granule neurons, hyperpolarizes the resting membrane potential to limit intrinsic neuronal excitability, but once the action potential threshold is reached, supports high-frequency action potential firing and increased neuronal excitability. Homomeric and/or heteromeric KCNK3:KCNK9 channels operate in cerebellar granule cells, whereas heteromeric KCNK1:KCNK9 enables currents in hippocampal dentate gyrus granule neurons. Dispensable for central chemosensory respiration i.e. breathing controlled by brainstem CO2/pH, it rather conducts pH-sensitive currents and controls the firing rate of serotonergic raphe neurons involved in potentiation of the respiratory chemoreflex. In retinal ganglion cells, mediates outward rectifying currents that regulate action potentials in response to acidification of the synaptic cleft. Involved in transmission of image-forming and nonimage-forming visual information in the retina. In adrenal gland, contributes to the maintenance of a hyperpolarized resting membrane potential of aldosterone-producing cells at zona glomerulosa and limits aldosterone release as part of a regulatory mechanism that controls arterial blood pressure and electrolyte homeostasis. This Mus musculus (Mouse) protein is Potassium channel subfamily K member 9.